A 435-amino-acid polypeptide reads, in one-letter code: MQISVESVNSIKKKLNFEIPADKVSAEVDKAYAEIRKHAAIKGFRKGKVPMSLIEKHYGEKMAEDVVKNLVQESYFSAVSEQGLNPVGYPAIESNPLKKGESFKYSATVEVFPEVEVKDYTGLAVVKEKLEIDDSVVAARLKEMQERMSQLGPAPEGHAAAMGDFVTFDFKGAMDGVYFEGGSAEDFQLELGSGRFIPGFEEQMVGMTVGTNSTIKVNFPEGYGNADLAGKPADFEVSIKEIKVKELPELNDDFAKEFGEEFETLDLLKAKLAEMNEAQEVSRINAELRDRLIKALIEKNELEVPEALVDRQAQMMLESTKQRLASQRLSLEMMGMTDDSYKAQFRDNAREQVKGSLLLDAVAEKEKIEPTEEEFEAQLSVIAEQTRQDLEKVTQLYKTNERAKDNLMAQMREDKAVQFILDRAKVTEVPKAEIK.

The PPIase FKBP-type domain maps to 163–248 (GDFVTFDFKG…IKEIKVKELP (86 aa)).

It belongs to the FKBP-type PPIase family. Tig subfamily.

Its subcellular location is the cytoplasm. It carries out the reaction [protein]-peptidylproline (omega=180) = [protein]-peptidylproline (omega=0). Involved in protein export. Acts as a chaperone by maintaining the newly synthesized protein in an open conformation. Functions as a peptidyl-prolyl cis-trans isomerase. The polypeptide is Trigger factor (Citrifermentans bemidjiense (strain ATCC BAA-1014 / DSM 16622 / JCM 12645 / Bem) (Geobacter bemidjiensis)).